Consider the following 492-residue polypeptide: Catalase (492 aa).

Residues His65 and Asn138 contribute to the active site. Tyr348 is a binding site for heme.

Belongs to the catalase family. In terms of assembly, homotetramer. Heme serves as cofactor.

Its subcellular location is the cytoplasm. The protein resides in the cytosol. The protein localises to the peroxisome matrix. The enzyme catalyses 2 H2O2 = O2 + 2 H2O. Catalyzes the degradation of hydrogen peroxide (H(2)O(2)) generated by peroxisomal oxidases to water and oxygen, thereby protecting cells from the toxic effects of hydrogen peroxide. The protein is Catalase of Soldanella alpina (Alpine snowbell).